We begin with the raw amino-acid sequence, 494 residues long: Protein DETOXIFICATION 23 (494 aa).

A disordered region spans residues 1 to 25 (MARREGEVTETLLKKSTENRGEDRD). Helical transmembrane passes span 40–60 (LWVV…LSLI), 74–94 (AAYS…LLGM), 123–143 (IVLT…GPIL), 158–178 (IIAL…TCQM), 188–208 (IIAY…WLLV), 223–243 (LVAH…GGCT), 268–288 (GGMI…TGNL), 297–317 (ALAI…GFMA), 340–360 (MVVV…FLFL), 384–404 (LLAF…VAVG), 416–436 (LACY…VVGL), and 441–461 (VWLG…VMTM).

The protein belongs to the multi antimicrobial extrusion (MATE) (TC 2.A.66.1) family.

The protein localises to the membrane. The polypeptide is Protein DETOXIFICATION 23 (Arabidopsis thaliana (Mouse-ear cress)).